We begin with the raw amino-acid sequence, 72 residues long: MAKEEVLEFPGVVTELLPNATFRVKLENEHEIIAHTAGRMRKNRIRVLAGDKVLVEMTPYDLTKGRITYRFK.

One can recognise an S1-like domain in the interval 1–72 (MAKEEVLEFP…TKGRITYRFK (72 aa)).

Belongs to the IF-1 family. As to quaternary structure, component of the 30S ribosomal translation pre-initiation complex which assembles on the 30S ribosome in the order IF-2 and IF-3, IF-1 and N-formylmethionyl-tRNA(fMet); mRNA recruitment can occur at any time during PIC assembly.

It is found in the cytoplasm. One of the essential components for the initiation of protein synthesis. Stabilizes the binding of IF-2 and IF-3 on the 30S subunit to which N-formylmethionyl-tRNA(fMet) subsequently binds. Helps modulate mRNA selection, yielding the 30S pre-initiation complex (PIC). Upon addition of the 50S ribosomal subunit IF-1, IF-2 and IF-3 are released leaving the mature 70S translation initiation complex. The polypeptide is Translation initiation factor IF-1 (Sinorhizobium medicae (strain WSM419) (Ensifer medicae)).